We begin with the raw amino-acid sequence, 331 residues long: NADH-cytochrome b5 reductase 2 (331 aa).

The helical transmembrane segment at 36 to 56 threads the bilayer; sequence VGILIASAVGMAGFGTYFMFG. An FAD-binding FR-type domain is found at 80–185; sequence KGFVSLQLDD…KGPLPKYEWS (106 aa). 188–223 is a binding site for FAD; sequence KHPHVAMIAGGTGITPMYQIMRAIFKNPADKTKVTL.

It belongs to the flavoprotein pyridine nucleotide cytochrome reductase family. Requires FAD as cofactor.

It localises to the mitochondrion outer membrane. The catalysed reaction is 2 Fe(III)-[cytochrome b5] + NADH = 2 Fe(II)-[cytochrome b5] + NAD(+) + H(+). In terms of biological role, may mediate the reduction of outer membrane cytochrome b5. The protein is NADH-cytochrome b5 reductase 2 (MCR1) of Pyricularia oryzae (strain 70-15 / ATCC MYA-4617 / FGSC 8958) (Rice blast fungus).